Reading from the N-terminus, the 452-residue chain is Pup--protein ligase (452 aa).

Residue glutamate 9 participates in Mg(2+) binding. Arginine 53 provides a ligand contact to ATP. Mg(2+) is bound at residue tyrosine 55. Aspartate 57 acts as the Proton acceptor in catalysis. Glutamate 63 contacts Mg(2+). Positions 66 and 419 each coordinate ATP.

The protein belongs to the Pup ligase/Pup deamidase family. Pup-conjugating enzyme subfamily.

It carries out the reaction ATP + [prokaryotic ubiquitin-like protein]-L-glutamate + [protein]-L-lysine = ADP + phosphate + N(6)-([prokaryotic ubiquitin-like protein]-gamma-L-glutamyl)-[protein]-L-lysine.. It functions in the pathway protein degradation; proteasomal Pup-dependent pathway. The protein operates within protein modification; protein pupylation. Its function is as follows. Catalyzes the covalent attachment of the prokaryotic ubiquitin-like protein modifier Pup to the proteasomal substrate proteins, thereby targeting them for proteasomal degradation. This tagging system is termed pupylation. The ligation reaction involves the side-chain carboxylate of the C-terminal glutamate of Pup and the side-chain amino group of a substrate lysine. The protein is Pup--protein ligase of Saccharomonospora viridis (strain ATCC 15386 / DSM 43017 / JCM 3036 / CCUG 5913 / NBRC 12207 / NCIMB 9602 / P101) (Thermoactinomyces viridis).